A 171-amino-acid polypeptide reads, in one-letter code: Large ribosomal subunit protein uL24 (171 aa).

Residues 1-124 (MNIKTGDTVV…AKPAKTKAEK (124 aa)) form a large ribosomal subunit protein uL24 region. The segment at 108-171 (GQTLDKAAKP…SVQKKGASGK (64 aa)) is disordered. A unknown region spans residues 125–171 (VEKAATSSTDKPAKVTKAAKEAKPVKAVKSQKVEKNTSVQKKGASGK).

The protein belongs to the universal ribosomal protein uL24 family. In terms of assembly, part of the 50S ribosomal subunit.

In terms of biological role, one of two assembly initiator proteins, it binds directly to the 5'-end of the 23S rRNA, where it nucleates assembly of the 50S subunit. One of the proteins that surrounds the polypeptide exit tunnel on the outside of the subunit. In Acholeplasma laidlawii (strain PG-8A), this protein is Large ribosomal subunit protein uL24.